The primary structure comprises 1435 residues: Protein SPP41 (1435 aa).

7 disordered regions span residues valine 16–isoleucine 74, valine 88–leucine 265, alanine 286–glutamine 309, glutamate 322–phenylalanine 424, glutamate 442–aspartate 482, serine 519–proline 708, and glutamine 934–threonine 972. A compositionally biased stretch (acidic residues) spans glycine 27 to aspartate 42. 3 stretches are compositionally biased toward basic and acidic residues: residues isoleucine 53–histidine 63, glutamate 98–glutamine 127, and leucine 139–valine 154. In terms of domain architecture, UIM spans glutamine 171–asparagine 190. A compositionally biased stretch (basic and acidic residues) spans glutamate 196–proline 205. Basic residues predominate over residues serine 211–serine 223. A compositionally biased stretch (basic and acidic residues) spans lysine 224 to serine 234. Positions lysine 235–aspartate 249 are enriched in basic residues. Polar residues predominate over residues alanine 286–threonine 301. A compositionally biased stretch (basic and acidic residues) spans lysine 345–alanine 355. A compositionally biased stretch (basic residues) spans lysine 367–threonine 383. Residues serine 384–serine 398 show a composition bias toward low complexity. Polar residues-rich tracts occupy residues glutamate 442 to aspartate 451 and aspartate 459 to aspartate 482. Basic and acidic residues-rich tracts occupy residues leucine 524–threonine 548, lysine 610–glutamate 628, and lysine 637–glutamate 652. A compositionally biased stretch (basic residues) spans lysine 665–arginine 674. Residues tryptophan 676 to proline 691 are compositionally biased toward basic and acidic residues. The short motif at lysine 683 to lysine 699 is the Nuclear localization signal element. Over residues arginine 692–lysine 706 the composition is skewed to basic residues. Lysine 981 participates in a covalent cross-link: Glycyl lysine isopeptide (Lys-Gly) (interchain with G-Cter in SUMO). Positions lysine 1005–serine 1014 are enriched in basic and acidic residues. The tract at residues lysine 1005–proline 1125 is disordered. Residue serine 1014 is modified to Phosphoserine. The span at asparagine 1021–glutamine 1032 shows a compositional bias: polar residues. Basic and acidic residues-rich tracts occupy residues glutamate 1033–alanine 1082 and leucine 1091–leucine 1103. Serine 1067 bears the Phosphoserine mark. A compositionally biased stretch (polar residues) spans alanine 1108 to glycine 1123. A Glycyl lysine isopeptide (Lys-Gly) (interchain with G-Cter in SUMO) cross-link involves residue lysine 1154.

As to quaternary structure, interacts with PRP8 and RAP1.

The protein resides in the nucleus. Functionally, negative regulator of PRP3 and PRP4 genes. The polypeptide is Protein SPP41 (SPP41) (Saccharomyces cerevisiae (strain ATCC 204508 / S288c) (Baker's yeast)).